The following is an 858-amino-acid chain: Gamma-secretase-activating protein (858 aa).

The protein belongs to the GSAP family. In terms of assembly, interacts with APP; specifically interacts with the CTF-alpha product of APP. Interacts with the gamma-secretase complex. The protein is first synthesized as a holoprotein form of 98 kDa and rapidly processed into the gamma-secretase-activating protein 16 kDa C-terminal form, which constitutes the predominant form.

The protein resides in the golgi apparatus. Its subcellular location is the trans-Golgi network. Functionally, regulator of gamma-secretase activity, which specifically activates the production of amyloid-beta protein (amyloid-beta protein 40 and amyloid-beta protein 42), without affecting the cleavage of other gamma-secretase targets such has Notch. The gamma-secretase complex is an endoprotease complex that catalyzes the intramembrane cleavage of integral membrane proteins such as Notch receptors and APP (amyloid-beta precursor protein). Specifically promotes the gamma-cleavage of APP CTF-alpha (also named APP-CTF) by the gamma-secretase complex to generate amyloid-beta, while it reduces the epsilon-cleavage of APP CTF-alpha, leading to a low production of AICD. This Mus musculus (Mouse) protein is Gamma-secretase-activating protein (Gsap).